The chain runs to 496 residues: Probable cytosol aminopeptidase (496 aa).

Mn(2+) contacts are provided by Lys266 and Asp271. Lys278 is a catalytic residue. Residues Asp289, Asp348, and Glu350 each coordinate Mn(2+). Arg352 is a catalytic residue.

It belongs to the peptidase M17 family. It depends on Mn(2+) as a cofactor.

The protein localises to the cytoplasm. The catalysed reaction is Release of an N-terminal amino acid, Xaa-|-Yaa-, in which Xaa is preferably Leu, but may be other amino acids including Pro although not Arg or Lys, and Yaa may be Pro. Amino acid amides and methyl esters are also readily hydrolyzed, but rates on arylamides are exceedingly low.. The enzyme catalyses Release of an N-terminal amino acid, preferentially leucine, but not glutamic or aspartic acids.. Its function is as follows. Presumably involved in the processing and regular turnover of intracellular proteins. Catalyzes the removal of unsubstituted N-terminal amino acids from various peptides. This is Probable cytosol aminopeptidase from Pseudomonas syringae pv. syringae (strain B728a).